The primary structure comprises 91 residues: DNA-directed RNA polymerase subunit Rpo11 (91 aa).

This sequence belongs to the archaeal Rpo11/eukaryotic RPB11/RPC19 RNA polymerase subunit family. In terms of assembly, part of the RNA polymerase complex.

Its subcellular location is the cytoplasm. It catalyses the reaction RNA(n) + a ribonucleoside 5'-triphosphate = RNA(n+1) + diphosphate. DNA-dependent RNA polymerase (RNAP) catalyzes the transcription of DNA into RNA using the four ribonucleoside triphosphates as substrates. The protein is DNA-directed RNA polymerase subunit Rpo11 of Methanococcoides burtonii (strain DSM 6242 / NBRC 107633 / OCM 468 / ACE-M).